A 496-amino-acid chain; its full sequence is Hexokinase-1 (496 aa).

A helical membrane pass occupies residues V4–V24. In terms of domain architecture, Hexokinase spans G35–A487. A hexokinase small subdomain region spans residues S90 to V228. Positions 104, 105, and 106 each coordinate ADP. T194, K195, N229, and D230 together coordinate D-glucose. The segment at N229–D476 is hexokinase large subdomain. Position 253 (T253) interacts with ADP. D-glucose-binding residues include N256, E284, and E315. Position 441 (G441) interacts with ADP.

It belongs to the hexokinase family. Interacts with RPT5B in nucleus. Interacts with RHIP1. Interacts with KING1 in mitochondria. Interacts with CLF (via SANT domain) and EZA1/SWN (via SANT domain) in nucleus. Highly expressed in flowers and siliques, at intermediate levels in roots and stems, and at lower levels in rosette and cauline leaves.

The protein localises to the mitochondrion outer membrane. It localises to the nucleus. It catalyses the reaction a D-hexose + ATP = a D-hexose 6-phosphate + ADP + H(+). It carries out the reaction D-fructose + ATP = D-fructose 6-phosphate + ADP + H(+). The enzyme catalyses D-glucose + ATP = D-glucose 6-phosphate + ADP + H(+). It functions in the pathway carbohydrate metabolism; hexose metabolism. It participates in carbohydrate degradation; glycolysis; D-glyceraldehyde 3-phosphate and glycerone phosphate from D-glucose: step 1/4. Functionally, fructose and glucose phosphorylating enzyme. May be involved in the phosphorylation of glucose during the export from mitochondrion to cytosol. Acts as a sugar sensor which may regulate sugar-dependent gene repression or activation. Mediates the effects of sugar on plant growth and development independently of its catalytic activity or the sugar metabolism. May regulate the execution of program cell death in plant cells. Promotes roots and leaves growth. Together with sugar, is involved in the regulation of the expression of aquaporin genes, and reduces leaf water conductance, to coordinate sugar levels with the loss of water through transpiration. Regulates cell proliferation and expansion early during leaf development. Involved in sucrose-induced leaf growth stimulation independently of GPT2. May participate to the stimulation of hypocotyl elongation under long-day (LD) conditions. Forms a nuclear complex with CLF and EZA1/SWN to target common glucose-responsive genes and regulate glucose signaling. Is required for CLF- and EZA1/SWN-mediated histone H3 trimethylation on 'Lys-27' (H3K27me3) and glucose-mediated gene repression. The polypeptide is Hexokinase-1 (Arabidopsis thaliana (Mouse-ear cress)).